The chain runs to 352 residues: Mitochondrial ubiquitin ligase activator of NFKB 1 (352 aa).

The Cytoplasmic portion of the chain corresponds to 1 to 8; sequence MESGGRPS. Residues 9–29 traverse the membrane as a helical segment; it reads LCQFILLGTTSVVTAALYSVY. The Mitochondrial intermembrane portion of the chain corresponds to 30 to 238; the sequence is RQKARVSQEL…LLQRQESSVR (209 aa). K52 is covalently cross-linked (Glycyl lysine isopeptide (Lys-Gly) (interchain with G-Cter in ubiquitin)). Residues 239-259 traverse the membrane as a helical segment; that stretch reads LWKVLALVFGFATCATLFFIL. Topologically, residues 260 to 352 are cytoplasmic; sequence RKQYLQRQER…ITRVIPLYNS (93 aa). Residues K273 and K299 each participate in a glycyl lysine isopeptide (Lys-Gly) (interchain with G-Cter in ubiquitin) cross-link. The segment at 302–340 adopts an RING-type zinc-finger fold; the sequence is CVVCLSSFKSCVFLECGHVCSCTECYRALPEPKKCPICR.

In terms of assembly, homooligomer. Interacts with MAP3K7/TAK1. Interacts with UBC9. Interacts with and sumoylates DNM1L. Interacts with MAVS. Interacts with TP53 (via N-terminus); the interaction leads to ubiquitination and proteasomal degradation of TP53. Ubiquitinated by PRKN during mitophagy, leading to its degradation and enhancement of mitophagy. Deubiquitinated by USP30. Widely expressed with highest levels in the heart, skeletal muscle, placenta, kidney and liver. Barely detectable in colon and thymus.

The protein resides in the mitochondrion outer membrane. Its subcellular location is the peroxisome. The catalysed reaction is S-ubiquitinyl-[E2 ubiquitin-conjugating enzyme]-L-cysteine + [acceptor protein]-L-lysine = [E2 ubiquitin-conjugating enzyme]-L-cysteine + N(6)-ubiquitinyl-[acceptor protein]-L-lysine.. It functions in the pathway protein modification; protein ubiquitination. The protein operates within protein modification; protein sumoylation. Exhibits weak E3 ubiquitin-protein ligase activity. E3 ubiquitin ligases accept ubiquitin from an E2 ubiquitin-conjugating enzyme in the form of a thioester and then directly transfer the ubiquitin to targeted substrates. Can ubiquitinate AKT1 preferentially at 'Lys-284' involving 'Lys-48'-linked polyubiquitination and seems to be involved in regulation of Akt signaling by targeting phosphorylated Akt to proteasomal degradation. Mediates polyubiquitination of cytoplasmic TP53 at 'Lys-24' which targets TP53 for proteasomal degradation, thus reducing TP53 levels in the cytoplasm and mitochondrion. Proposed to preferentially act as a SUMO E3 ligase at physiological concentrations. Plays a role in the control of mitochondrial morphology by promoting mitochondrial fragmentation, and influences mitochondrial localization. Likely to promote mitochondrial fission through negatively regulating the mitochondrial fusion proteins MFN1 and MFN2, acting in a pathway that is parallel to the PRKN/PINK1 regulatory pathway. May also be involved in the sumoylation of the membrane fission protein DNM1L. Inhibits cell growth. When overexpressed, activates JNK through MAP3K7/TAK1 and induces caspase-dependent apoptosis. Involved in the modulation of innate immune defense against viruses by inhibiting RIGI-dependent antiviral response. Can mediate RIGI sumoylation and disrupt its polyubiquitination. In Homo sapiens (Human), this protein is Mitochondrial ubiquitin ligase activator of NFKB 1 (MUL1).